A 261-amino-acid chain; its full sequence is MPQNDYIERHIKQHGKRLDHEERKRKREARESHKISERAQKLTGWKGKQFAKKRYAEKVSMRKKIKAHEQSKVKGSSKPLDTDGDALPTYLLDREQNNTAKAISSSIKQKRLEKADKFSVPLPKVRGISEEEMFKVIKTGKSRSKSWKRMITKHTFVGEGFTRRPVKMERIIRPSALRQKKANVTHPELGVTVFLPILAVKKNPQSPMYTQLGVLTKGTIIEVNVSELGMVTAGGKVVWGKYAQVTNEPDRDGCVNAVLLV.

Positions 1–40 (MPQNDYIERHIKQHGKRLDHEERKRKREARESHKISERAQ) are enriched in basic and acidic residues. Residues 1–43 (MPQNDYIERHIKQHGKRLDHEERKRKREARESHKISERAQKLT) form a disordered region. 2 consecutive short sequence motifs (nuclear localization signal) follow at residues 15-22 (GKRLDHEE) and 51-58 (AKKRYAEK). Residues 61–87 (MRKKIKAHEQSKVKGSSKPLDTDGDAL) form a disordered region.

Belongs to the eukaryotic ribosomal protein eS8 family. Ribosome biogenesis protein NSA2 subfamily. In terms of assembly, component of the pre-66S ribosomal particle. Interacts with NOP7 and RRP1. Interacts with RSA4 (via WD repeats).

It is found in the nucleus. The protein localises to the nucleolus. Involved in the biogenesis of the 60S ribosomal subunit. May play a part in the quality control of pre-60S particles. Under normal, rapid growth conditions, high levels of NSA2 would allow the progression of pre-60S particles through the ITS2 processing. This chain is Ribosome biogenesis protein NSA2 (NSA2), found in Saccharomyces cerevisiae (strain YJM789) (Baker's yeast).